We begin with the raw amino-acid sequence, 329 residues long: Deoxynucleotidyltransferase terminal-interacting protein 1 (329 aa).

Disordered stretches follow at residues 1-22 and 147-178; these read MGAT…GGLE and KRGR…ILSS. The segment at 56-147 is important for dimerization; sequence MTTSFTDPAI…RLTHELPGIK (92 aa). The span at 147–158 shows a compositional bias: basic and acidic residues; that stretch reads KRGRQAEEECAH. Positions 159–173 form a DNA-binding region, a.T hook; the sequence is RGSPLPKKRKGRPPG. Phosphoserine is present on S161. A Nuclear localization signal motif is present at residues 164-170; the sequence is PKKRKGR. The interval 197–316 is important for DNA and nucleosome binding; sequence REGPKWDPAR…MRKYMETLRT (120 aa). The segment at residues 216–237 is a DNA-binding region (H-T-H motif); it reads GSRANKALGMGGTRGRIYIKHP.

As to quaternary structure, monomer and homodimer. A minor proportion may form homotrimers. Interacts with ZNF541. Interacts with the terminal deoxynucleotidyltransferase DNTT. Interacts with TRERF1. Identified in a histone deacetylase complex that contains DNTTIP1, HDAC1 and MIDEAS; this complex assembles into a tetramer that contains four copies of each protein chain. Component of a histone deacetylase complex containing DNTTIP1, ZNF541, HDAC1 and HDAC2. Identified in a complex with KCTD19, HDAC1, HDAC2 and ZNF541.

The protein localises to the nucleus. In terms of biological role, increases DNTT terminal deoxynucleotidyltransferase activity (in vitro). Also acts as a transcriptional regulator, binding to the consensus sequence 5'-GNTGCATG-3' following an AT-tract. Associates with RAB20 promoter and positively regulates its transcription. Binds DNA and nucleosomes; may recruit HDAC1 complexes to nucleosomes or naked DNA. The protein is Deoxynucleotidyltransferase terminal-interacting protein 1 (DNTTIP1) of Homo sapiens (Human).